Here is a 365-residue protein sequence, read N- to C-terminus: MINLGDKQSTIVVAMSGGVDSSAVAAMLHEQGHNVIGITLQLYDHGMAVGKKNACCAGQDIYDAKMVANKLGIPHYVLDYESKFKESVIDNFVDSYLQGETPLPCVRCNKSVKFRDLIKTARELGADKLATGHYVRKINGDNGAELYTGLDPAKDQSYFLFTTTKEQLEYLRFPLGGLTKDETRKLASKFGLEVADKPDSQDICFVPDGNYKSVINKIRPNSSESGKIIHVNGFKLGEHSGIINYTIGQRRGLGIAYNEPLYVVKIDPKDNIVYVGPESALNVQEFIIRDVNWLADEIKDNEKLEVAVKIRSTRPPRLAEISKLGDDKMKVKFLCAEKAVAPGQACVIYAGERVLGGGWITREIR.

Residues 14-21 (AMSGGVDS) and L40 each bind ATP. Residue C108 is the Nucleophile of the active site. Residues C108 and C204 are joined by a disulfide bond. G132 provides a ligand contact to ATP. The tract at residues 154–156 (KDQ) is interaction with tRNA. The active-site Cysteine persulfide intermediate is C204.

Belongs to the MnmA/TRMU family.

The protein localises to the cytoplasm. The enzyme catalyses S-sulfanyl-L-cysteinyl-[protein] + uridine(34) in tRNA + AH2 + ATP = 2-thiouridine(34) in tRNA + L-cysteinyl-[protein] + A + AMP + diphosphate + H(+). Catalyzes the 2-thiolation of uridine at the wobble position (U34) of tRNA, leading to the formation of s(2)U34. The sequence is that of tRNA-specific 2-thiouridylase MnmA from Rickettsia massiliae (strain Mtu5).